Reading from the N-terminus, the 145-residue chain is D-aminoacyl-tRNA deacylase (145 aa).

The Gly-cisPro motif, important for rejection of L-amino acids signature appears at 137-138; sequence GP.

This sequence belongs to the DTD family. As to quaternary structure, homodimer.

The protein localises to the cytoplasm. It catalyses the reaction glycyl-tRNA(Ala) + H2O = tRNA(Ala) + glycine + H(+). The enzyme catalyses a D-aminoacyl-tRNA + H2O = a tRNA + a D-alpha-amino acid + H(+). Functionally, an aminoacyl-tRNA editing enzyme that deacylates mischarged D-aminoacyl-tRNAs. Also deacylates mischarged glycyl-tRNA(Ala), protecting cells against glycine mischarging by AlaRS. Acts via tRNA-based rather than protein-based catalysis; rejects L-amino acids rather than detecting D-amino acids in the active site. By recycling D-aminoacyl-tRNA to D-amino acids and free tRNA molecules, this enzyme counteracts the toxicity associated with the formation of D-aminoacyl-tRNA entities in vivo and helps enforce protein L-homochirality. This Pseudomonas syringae pv. syringae (strain B728a) protein is D-aminoacyl-tRNA deacylase.